Consider the following 211-residue polypeptide: Neuroendocrine protein 7B2 (211 aa).

The first 26 residues, 1-26, serve as a signal peptide directing secretion; that stretch reads MVSRMVSTMLSGLLFWLASGWTPAFA. Residues 106 to 132 form a disordered region; sequence DFSEDQGYPDPPNPCPVGKTDDGCLEN. A disulfide bridge links cysteine 120 with cysteine 129. Phosphoserine is present on residues serine 140 and serine 204. Residues 173–211 form a disordered region; it reads GGERRKRRSVNPYLQGQRLDNVVAKKSVPHFSDEDKDPE.

It belongs to the 7B2 family. In terms of assembly, interacts with PCSK2/PC2 early in the secretory pathway. Dissociation occurs at later stages. Proteolytically cleaved in the Golgi by a furin-like convertase to generate bioactive peptides. In terms of processing, sulfated on tyrosine residues.

It is found in the secreted. Its function is as follows. Acts as a molecular chaperone for PCSK2/PC2, preventing its premature activation in the regulated secretory pathway. Binds to inactive PCSK2 in the endoplasmic reticulum and facilitates its transport from there to later compartments of the secretory pathway where it is proteolytically matured and activated. Also required for cleavage of PCSK2 but does not appear to be involved in its folding. Plays a role in regulating pituitary hormone secretion. The C-terminal peptide inhibits PCSK2 in vitro. The sequence is that of Neuroendocrine protein 7B2 (SCG5) from Pan troglodytes (Chimpanzee).